Consider the following 316-residue polypeptide: Melanocyte-stimulating hormone receptor (316 aa).

The Extracellular segment spans residues 1 to 37 (MAVQGSQRRLLGSLNSTPTAIPQLGLAANQTGARCLE). Asn29 carries N-linked (GlcNAc...) asparagine glycosylation. A helical membrane pass occupies residues 38–63 (VSIPDGLFLSLGLVSLVENVLVVATI). Residues 64–72 (AKNRNLHSP) are Cytoplasmic-facing. The helical transmembrane segment at 73-93 (MYCFICCLALSDLLVSGSNVV) threads the bilayer. Residues 94-117 (DTLLLLLEAGALAARAAVLQQLDN) lie on the Extracellular side of the membrane. A helical transmembrane segment spans residues 118–139 (VIDVITCSSMLSSLCFLGAIAV). Topologically, residues 140–162 (DRYISIFYALRYRSIVTLPRARR) are cytoplasmic. Residues 163–182 (AVAAIWVASVLFSTLFIAYY) form a helical membrane-spanning segment. Topologically, residues 183–190 (DHTAVLLC) are extracellular. Residues 191–210 (LVVFFLAMLVLMAVLYVHML) traverse the membrane as a helical segment. Over 211-239 (ARACQHAQGIARLHKRQRPVHKGFGLKGP) the chain is Cytoplasmic. A helical transmembrane segment spans residues 240-265 (VTLTILLGIFFLCWGPFFLHLTLIVL). Topologically, residues 266 to 278 (CPEHPTCGCIFKN) are extracellular. The chain crosses the membrane as a helical span at residues 279–299 (FNLFLALIICNAIIDPLIYAF). At 300-316 (HSQELRRTLKEVLTCSW) the chain is on the cytoplasmic side. Cys314 carries S-palmitoyl cysteine lipidation.

Belongs to the G-protein coupled receptor 1 family. As to quaternary structure, interacts with MGRN1, but does not undergo MGRN1-mediated ubiquitination; this interaction competes with GNAS-binding and thus inhibits agonist-induced cAMP production. Interacts with OPN3; the interaction results in a decrease in MC1R-mediated cAMP signaling and ultimately a decrease in melanin production in melanocytes.

The protein localises to the cell membrane. Receptor for MSH (alpha, beta and gamma) and ACTH. The activity of this receptor is mediated by G proteins which activate adenylate cyclase. Mediates melanogenesis, the production of eumelanin (black/brown) and phaeomelanin (red/yellow), via regulation of cAMP signaling in melanocytes. The polypeptide is Melanocyte-stimulating hormone receptor (MC1R) (Gorilla gorilla gorilla (Western lowland gorilla)).